We begin with the raw amino-acid sequence, 450 residues long: Hydrolase ffsE (450 aa).

The Nucleophile role is filled by serine 266.

Belongs to the AB hydrolase superfamily. FUS2 hydrolase family. As to quaternary structure, homodimer.

The protein operates within mycotoxin biosynthesis. Functionally, hydrolase; part of the gene cluster that mediates the biosynthesis of the cytotoxic leucine-containing cytochalasans, including aspochalasin C, aspochalasin E, TMC-169, flavichalasine F, aspergillin PZ, aspochalasin M and flavichalasine G. The first step in the pathway is catalyzed by the hybrid PKS-NRPS ffsA that utilizes 8 units of malonyl-CoA to iteratively assemble the octaketide chain before addition of L-leucine by the C-terminal NRPS modules. Because ffsA lacks a designated enoylreductase (ER) domain, the required activity is provided the enoyl reductase fssC. The methyltransferase (MT) domain of ffsA catalyzes the alpha-methylation at C10 and C14 using S-adenosyl-L-methionine as the methyl-donating cosubstrate. Reduction by the hydrolyase ffsE, followed by dehydration and intra-molecular Diels-Alder cyclization by the Diels-Alderase ffsF then yield the required isoindolone-fused macrocycle. A number of oxidative steps catalyzed by the tailoring cytochrome P450 monooxygenase ffsD, the FAD-linked oxidoreductase ffsJ and the short-chain dehydrogenase/reductase ffsI, are further required to afford the final products. The polypeptide is Hydrolase ffsE (Aspergillus flavipes).